The following is an 880-amino-acid chain: MKPLKPLTGAQIRQMYLDFFQSKGHAIEPSASLVPIEDPTLLWINSGVATLKKYFDGRVIPQNPRIVNAQKSIRTNDIENVGKTARHHTFFEMLGNFSVGDYFREDAIKWGWELLTSDEWYGLDPDRLSVTIHPEDDAARQIWLELGVPAERIIPLEDNFWEIGEGPSGPNTEIFFDRGPAFGDDPNDSELYPGGENERYLEIWNIVFSQYNHDGHGNYTELPRKNIDTGMGLERMASVMQDVPTNFDTDLFMPIIHKTEEISGKRYREDTKLDVAFKVIADHIRTVAFAIGDGALPSNEGRGYVLRRLLRRAVRYAKMLGIERPFMYELVDTVGSVMVDFYPQVPEKADFIKRVIKNEEERFHETLHDGLAILNTVAQAAKNNGEHIISGEDAFRLYDTYGFPLELTVEYAEDHQMSVDEEGFKRAMDEQRKRARAAREDGGSMQQQSEVLATLTVPSQFVGYTDLEADAKIIALLHDGERVTEVAAGEEAQLLLDVTPFYAESGGEVADSGTITGPDFVLDVKDVQKAPNGQNLHTVVVRTGIALADASVHAAVEASSRQAITKNHTATHLLHKALKDTLGTHVNQAGSLVSAERLRFDFSHFGAVTAEELATIEQDVNQAIWASLAVEIEEMNIADAKAKGAMALFGEKYGETVRVVSAGTYSIELCGGIHVRNTAEIGLFKIVSESGIGAGTRRIEAVTGAGAYHVMNGHLQTLEQAARVLKTKTTEVPGRIEALQVQLRETERAHESLQAKLANIEAASLKDDVEQINGVQVLAKQVDVSDMDALRGMMDELKSSLGSAIIVLGSAQGDKVNLVASVSKDLIDQGYHAGKLIKEVATRCGGGGGGRPDMAQAGGKDPAKLNEALAFTSHYVQSLA.

Residues H568, H572, C670, and H674 each coordinate Zn(2+).

Belongs to the class-II aminoacyl-tRNA synthetase family. It depends on Zn(2+) as a cofactor.

The protein resides in the cytoplasm. The enzyme catalyses tRNA(Ala) + L-alanine + ATP = L-alanyl-tRNA(Ala) + AMP + diphosphate. In terms of biological role, catalyzes the attachment of alanine to tRNA(Ala) in a two-step reaction: alanine is first activated by ATP to form Ala-AMP and then transferred to the acceptor end of tRNA(Ala). Also edits incorrectly charged Ser-tRNA(Ala) and Gly-tRNA(Ala) via its editing domain. The chain is Alanine--tRNA ligase from Exiguobacterium sibiricum (strain DSM 17290 / CCUG 55495 / CIP 109462 / JCM 13490 / 255-15).